The chain runs to 343 residues: Programmed cell death protein 2 (343 aa).

C134, C137, C145, C148, C154, H158, H167, and C171 together coordinate Zn(2+). The MYND-type; atypical zinc-finger motif lies at 134–171; it reads CRVCGCLAPMTCSRCKQAHYCSKEHQTLDWRLGHKQAC.

In terms of processing, ubiquitinated by PRKN, promoting proteasomal degradation.

It is found in the nucleus. May be a DNA-binding protein with a regulatory function. May play an important role in cell death and/or in regulation of cell proliferation. This chain is Programmed cell death protein 2 (Pdcd2), found in Mus musculus (Mouse).